The following is a 426-amino-acid chain: Serine--tRNA ligase (426 aa).

Residue 233 to 235 participates in L-serine binding; it reads TAE. Residue 264 to 266 participates in ATP binding; the sequence is RSE. E287 is an L-serine binding site. 351 to 354 contributes to the ATP binding site; it reads EISS. S387 lines the L-serine pocket.

The protein belongs to the class-II aminoacyl-tRNA synthetase family. Type-1 seryl-tRNA synthetase subfamily. In terms of assembly, homodimer. The tRNA molecule binds across the dimer.

The protein resides in the cytoplasm. It carries out the reaction tRNA(Ser) + L-serine + ATP = L-seryl-tRNA(Ser) + AMP + diphosphate + H(+). It catalyses the reaction tRNA(Sec) + L-serine + ATP = L-seryl-tRNA(Sec) + AMP + diphosphate + H(+). The protein operates within aminoacyl-tRNA biosynthesis; selenocysteinyl-tRNA(Sec) biosynthesis; L-seryl-tRNA(Sec) from L-serine and tRNA(Sec): step 1/1. In terms of biological role, catalyzes the attachment of serine to tRNA(Ser). Is also able to aminoacylate tRNA(Sec) with serine, to form the misacylated tRNA L-seryl-tRNA(Sec), which will be further converted into selenocysteinyl-tRNA(Sec). The sequence is that of Serine--tRNA ligase from Pseudomonas putida (strain GB-1).